Here is a 618-residue protein sequence, read N- to C-terminus: Matrix metalloproteinase-24 (618 aa).

Residues 1 to 41 (MPRSRGGRAAPGQAARWSGWRAPGRLLPLLPALCCLAAAAG) form the signal peptide. The propeptide occupies 42–128 (AGKPAGADAP…HLSRRRRNKR (87 aa)). Over 42-575 (AGKPAGADAP…IDDVPGSVNA (534 aa)) the chain is Extracellular. Residues 110 to 117 (PRCGVPDH) carry the Cysteine switch motif. Residues Cys112 and His255 each coordinate Zn(2+). Glu256 is a catalytic residue. The Zn(2+) site is built by His259 and His265. Residues 296–352 (QKIYGPPAEPLEPTRPLPTLPVRRIHSPSERKHERQPRPPRPPLGDRPSTPGAKPNI) form a disordered region. Residues 302 to 314 (PAEPLEPTRPLPT) are compositionally biased toward pro residues. Over residues 322-332 (SPSERKHERQP) the composition is skewed to basic and acidic residues. Hemopexin repeat units follow at residues 350 to 398 (PNIC…WKGL), 399 to 444 (PARI…GSCL), 446 to 494 (REGI…KGIP), and 495 to 542 (QAPQ…WMGC). A disulfide bridge links Cys353 with Cys542. The helical transmembrane segment at 576–596 (VAVVVPCTLSLCLLVLLYTIF) threads the bilayer. Topologically, residues 597 to 618 (QFKNKTGPQPVTYYKRPVQEWV) are cytoplasmic. Residues 616 to 618 (EWV) carry the PDZ-binding motif.

Belongs to the peptidase M10A family. Interacts (via PDZ-binding motif) with APBA3 (via PDZ domain). Interacts with GRIP1 and GRIP2. It depends on Zn(2+) as a cofactor. Requires Ca(2+) as cofactor. Cleaved by a furin endopeptidase in the trans-Golgi network. In terms of tissue distribution, predominantly expressed in the nervous system: while enriched in the central nervous system, expression is also detected in the peripheral nervous system, including the trigeminal ganglion. Expression is not restricted to the nervous system: it is also enriched in the thymus, with a lower level of expression present in the aorta. In brain, high expression is present in the brain parenchyma, particularly within the neocortex.

It localises to the cell membrane. It is found in the golgi apparatus. The protein resides in the trans-Golgi network membrane. Its subcellular location is the secreted. The protein localises to the extracellular space. It localises to the extracellular matrix. In terms of biological role, metalloprotease that mediates cleavage of N-cadherin (CDH2) and acts as a regulator of neuro-immune interactions and neural stem cell quiescence. Involved in cell-cell interactions between nociceptive neurites and mast cells, possibly by mediating cleavage of CDH2, thereby acting as a mediator of peripheral thermal nociception and inflammatory hyperalgesia. Key regulator of neural stem cells quiescence by mediating cleavage of CDH2, affecting CDH2-mediated anchorage of neural stem cells to ependymocytes in the adult subependymal zone, leading to modulate their quiescence. May play a role in axonal growth. Able to activate progelatinase A. May also be a proteoglycanase involved in degradation of proteoglycans, such as dermatan sulfate and chondroitin sulfate proteoglycans. Cleaves partially fibronectin, but not collagen type I, nor laminin. The chain is Matrix metalloproteinase-24 (Mmp24) from Rattus norvegicus (Rat).